The chain runs to 162 residues: uncharacterized protein (162 aa).

This is an uncharacterized protein from Picosynechococcus sp. (strain ATCC 27264 / PCC 7002 / PR-6) (Agmenellum quadruplicatum).